Here is a 342-residue protein sequence, read N- to C-terminus: MKVEDFDFDLPEELIAQTPLLDRTSSRLMVLDKKSGDIKDQHFTDIISYLNEGDALVLNDTRVLPARLHGIKDETGAHIEVLLLKQKEGNAWETLVKPAKRIRKGATITFGDGALKAICLEELEHGGRILEFSYEGIFYEVLEQLGEMPLPPYIKEQLADQDRYQTVYAKENGSAAAPTAGLHFTEDLLAKISAKGVEIIFVTLHVGLGTFRPVDVEDTANHKMHSEFYRLTEESAERINKIKAQGGKVVAVGTTSIRTLETIASRHDGKLVAESGWTEIFISPGYTFQAVDALITNFHLPKSTLIMLVSALSDRTKILAAYNHAVEEQYRFFSFGDAMFIH.

Belongs to the QueA family. Monomer.

The protein localises to the cytoplasm. It carries out the reaction 7-aminomethyl-7-carbaguanosine(34) in tRNA + S-adenosyl-L-methionine = epoxyqueuosine(34) in tRNA + adenine + L-methionine + 2 H(+). It participates in tRNA modification; tRNA-queuosine biosynthesis. Its function is as follows. Transfers and isomerizes the ribose moiety from AdoMet to the 7-aminomethyl group of 7-deazaguanine (preQ1-tRNA) to give epoxyqueuosine (oQ-tRNA). This chain is S-adenosylmethionine:tRNA ribosyltransferase-isomerase, found in Listeria monocytogenes serotype 4b (strain CLIP80459).